A 426-amino-acid chain; its full sequence is Histidine--tRNA ligase (426 aa).

Belongs to the class-II aminoacyl-tRNA synthetase family. In terms of assembly, homodimer.

It is found in the cytoplasm. The enzyme catalyses tRNA(His) + L-histidine + ATP = L-histidyl-tRNA(His) + AMP + diphosphate + H(+). In Prochlorococcus marinus (strain MIT 9301), this protein is Histidine--tRNA ligase.